The chain runs to 238 residues: Purine nucleoside phosphorylase DeoD-type (238 aa).

Residue H4 coordinates a purine D-ribonucleoside. Residues G20, R24, R43, and R87–S90 each bind phosphate. Residues E179–E181 and S203–D204 each bind a purine D-ribonucleoside. The active-site Proton donor is the D204.

Belongs to the PNP/UDP phosphorylase family. In terms of assembly, homohexamer; trimer of homodimers.

The catalysed reaction is a purine D-ribonucleoside + phosphate = a purine nucleobase + alpha-D-ribose 1-phosphate. It catalyses the reaction a purine 2'-deoxy-D-ribonucleoside + phosphate = a purine nucleobase + 2-deoxy-alpha-D-ribose 1-phosphate. In terms of biological role, catalyzes the reversible phosphorolytic breakdown of the N-glycosidic bond in the beta-(deoxy)ribonucleoside molecules, with the formation of the corresponding free purine bases and pentose-1-phosphate. In Haemophilus influenzae (strain PittGG), this protein is Purine nucleoside phosphorylase DeoD-type.